Here is a 72-residue protein sequence, read N- to C-terminus: Translation initiation factor IF-1 (72 aa).

The region spanning 1–72 (MAKDNVIEIE…SKGRITYRFK (72 aa)) is the S1-like domain.

This sequence belongs to the IF-1 family. As to quaternary structure, component of the 30S ribosomal translation pre-initiation complex which assembles on the 30S ribosome in the order IF-2 and IF-3, IF-1 and N-formylmethionyl-tRNA(fMet); mRNA recruitment can occur at any time during PIC assembly.

Its subcellular location is the cytoplasm. In terms of biological role, one of the essential components for the initiation of protein synthesis. Stabilizes the binding of IF-2 and IF-3 on the 30S subunit to which N-formylmethionyl-tRNA(fMet) subsequently binds. Helps modulate mRNA selection, yielding the 30S pre-initiation complex (PIC). Upon addition of the 50S ribosomal subunit IF-1, IF-2 and IF-3 are released leaving the mature 70S translation initiation complex. The protein is Translation initiation factor IF-1 of Pediococcus pentosaceus (strain ATCC 25745 / CCUG 21536 / LMG 10740 / 183-1w).